Reading from the N-terminus, the 743-residue chain is Mitochondrial exoribonuclease DSS-1 (743 aa).

A mitochondrion-targeting transit peptide spans 1 to 67 (MTPRRVAKLV…KELLHLQRSL (67 aa)). An RNB domain is found at 186-542 (THNPAYAIDS…VHHQLKVWLW (357 aa)). Residues 320–357 (VGNQHHHTERESTQASPAKREEGKKGMVASGGTSSCRP) are disordered. Basic and acidic residues predominate over residues 325-344 (HHTERESTQASPAKREEGKK).

The protein belongs to the RNR ribonuclease family. As to quaternary structure, component of the mitochondrial 3' processome (MPsome) complex composed at least of terminal uridylyltransferase KRET1/TUT1, 3'-5' exonuclease DSS1, MPSS1, MPSS2 and MPSS3. Within the complex, interacts with KRET1 and MPSS2. Component of the mitochondrial degradosome complex composed at least of 3'-5' exonuclease DSS1 and helicase SUV3. Within the complex, interacts with helicase SUV3.

It is found in the mitochondrion. The enzyme catalyses Exonucleolytic cleavage in the 3'- to 5'-direction to yield nucleoside 5'-phosphates.. Its function is as follows. 3'-5'exoribonuclease which is involved in the post-transcriptional processing, editing and degradation of mitochondrial RNAs, including mRNAs, rRNAs and guided RNAs (gRNA). As part of the mitochondrial 3' processome (MPsome), involved in the maturation of guided RNA (gRNA) precursors by catalyzing the processive 3'-5' degradation of uridylated gRNA precursors. Plays a role in the degradation of 12S rRNA processing intermediates and maturation by-products. The sequence is that of Mitochondrial exoribonuclease DSS-1 from Trypanosoma brucei brucei.